A 230-amino-acid chain; its full sequence is Lactate utilization protein C (230 aa).

The protein belongs to the LutC/YkgG family.

In terms of biological role, is involved in L-lactate degradation and allows cells to grow with lactate as the sole carbon source. The protein is Lactate utilization protein C of Halalkalibacterium halodurans (strain ATCC BAA-125 / DSM 18197 / FERM 7344 / JCM 9153 / C-125) (Bacillus halodurans).